The primary structure comprises 224 residues: Ribonuclease 3 (224 aa).

Residues 5 to 127 (LERLCRRLNY…ILAAIYLDGG (123 aa)) form the RNase III domain. E40 serves as a coordination point for Mg(2+). D44 is an active-site residue. 2 residues coordinate Mg(2+): D113 and E116. The active site involves E116. The DRBM domain occupies 154–224 (DAKTQLQEFL…AKAMLEQLQG (71 aa)).

The protein belongs to the ribonuclease III family. As to quaternary structure, homodimer. It depends on Mg(2+) as a cofactor.

It is found in the cytoplasm. It carries out the reaction Endonucleolytic cleavage to 5'-phosphomonoester.. In terms of biological role, digests double-stranded RNA. Involved in the processing of primary rRNA transcript to yield the immediate precursors to the large and small rRNAs (23S and 16S). Processes some mRNAs, and tRNAs when they are encoded in the rRNA operon. Processes pre-crRNA and tracrRNA of type II CRISPR loci if present in the organism. This chain is Ribonuclease 3, found in Legionella pneumophila (strain Paris).